Here is a 1544-residue protein sequence, read N- to C-terminus: Lysophospholipase NTE1 (1544 aa).

Over 1–37 (MSTIEIVSTVAEYTEIHSPVSSKFLLPSARDSSSSIS) the chain is Cytoplasmic. Residues 38–58 (LFSAIFWFWSWLFFKIMNIFL) traverse the membrane as a helical segment. Topologically, residues 59-76 (YYIPNIIVNLFSVNFQIT) are lumenal. A helical transmembrane segment spans residues 77–97 (LSLSSIVITLTGIISFCFLIV). Over 98–1544 (RYKYLTRYSK…RKSLYRRSSI (1447 aa)) the chain is Cytoplasmic. 2 disordered regions span residues 265–312 (RLFS…RNYP) and 424–552 (ESPS…EETE). Positions 275 to 310 (NPASNPLSPDNTGSKSFDPLSSGNFNDTSLSSSDRN) are enriched in polar residues. Over residues 425 to 447 (SPSVSINKTSSSSSSLPKKSTTS) the composition is skewed to low complexity. Composition is skewed to polar residues over residues 448–458 (LRPLNRNQSSR) and 517–536 (QISS…TTKF). The segment covering 537–546 (ENIRDRTFSD) has biased composition (basic and acidic residues). Residues 681-811 (SFES…LKSL) and 807-960 (KLKS…VANK) contribute to the a nucleoside 3',5'-cyclic phosphate site. One can recognise a PNPLA domain in the interval 1237-1401 (LVLGGGGSRG…LDNLPVMEMK (165 aa)). The GXGXXG signature appears at 1241 to 1246 (GGGSRG). The GXSXG signature appears at 1268–1272 (GTSIG). Ser1270 serves as the catalytic Nucleophile. The Proton acceptor role is filled by Asp1388. The DGA/G signature appears at 1388 to 1390 (DGG).

This sequence belongs to the NTE family.

The protein localises to the endoplasmic reticulum membrane. It carries out the reaction a 1-acyl-sn-glycero-3-phosphocholine + H2O = sn-glycerol 3-phosphocholine + a fatty acid + H(+). Its activity is regulated as follows. Inhibited by organophosphorus esters. In terms of biological role, intracellular phospholipase B that catalyzes the double deacylation of phosphatidylcholine (PC) to glycerophosphocholine (GroPCho). Plays an important role in membrane lipid homeostasis. Responsible for the rapid PC turnover in response to inositol, elevated temperatures, or when choline is present in the growth medium. The sequence is that of Lysophospholipase NTE1 (NTE1) from Debaryomyces hansenii (strain ATCC 36239 / CBS 767 / BCRC 21394 / JCM 1990 / NBRC 0083 / IGC 2968) (Yeast).